The sequence spans 269 residues: tRNA pseudouridine synthase A (269 aa).

Asp55 acts as the Nucleophile in catalysis. Residue Tyr111 coordinates substrate.

It belongs to the tRNA pseudouridine synthase TruA family.

The enzyme catalyses uridine(38/39/40) in tRNA = pseudouridine(38/39/40) in tRNA. Formation of pseudouridine at positions 38, 39 and 40 in the anticodon stem and loop of transfer RNAs. This is tRNA pseudouridine synthase A from Methanosarcina mazei (strain ATCC BAA-159 / DSM 3647 / Goe1 / Go1 / JCM 11833 / OCM 88) (Methanosarcina frisia).